The sequence spans 313 residues: Uracil-DNA glycosylase (313 aa).

Residues 35–68 (DEPMPKKCRRPAGPPKGFISTRGDTSPSSDNNHI) are disordered. The segment covering 56–68 (RGDTSPSSDNNHI) has biased composition (polar residues). The active-site Proton acceptor is the Asp153.

It belongs to the uracil-DNA glycosylase (UDG) superfamily. UNG family.

It localises to the host nucleus. It carries out the reaction Hydrolyzes single-stranded DNA or mismatched double-stranded DNA and polynucleotides, releasing free uracil.. Functionally, excises uracil residues from the DNA which can arise as a result of misincorporation of dUMP residues by DNA polymerase or deamination of cytosines. Therefore may reduce deleterious uracil incorporation into the viral genome, particularly in terminally differentiated cells which lack DNA repair enzymes. The protein is Uracil-DNA glycosylase (MDV014) of Gallus gallus (Chicken).